A 199-amino-acid polypeptide reads, in one-letter code: Elongation factor Ts (199 aa).

Residues 82 to 85 (TDFV) form an involved in Mg(2+) ion dislocation from EF-Tu region.

This sequence belongs to the EF-Ts family.

The protein resides in the cytoplasm. Its function is as follows. Associates with the EF-Tu.GDP complex and induces the exchange of GDP to GTP. It remains bound to the aminoacyl-tRNA.EF-Tu.GTP complex up to the GTP hydrolysis stage on the ribosome. The chain is Elongation factor Ts from Leptospira interrogans serogroup Icterohaemorrhagiae serovar Lai (strain 56601).